The chain runs to 371 residues: tRNA-specific 2-thiouridylase MnmA (371 aa).

ATP is bound by residues 7 to 14 (AMSGGVDS) and L33. C101 serves as the catalytic Nucleophile. C101 and C213 are joined by a disulfide. G125 is an ATP binding site. Residues 163–165 (KDQ) are interaction with tRNA. The active-site Cysteine persulfide intermediate is C213.

Belongs to the MnmA/TRMU family.

The protein resides in the cytoplasm. It carries out the reaction S-sulfanyl-L-cysteinyl-[protein] + uridine(34) in tRNA + AH2 + ATP = 2-thiouridine(34) in tRNA + L-cysteinyl-[protein] + A + AMP + diphosphate + H(+). Functionally, catalyzes the 2-thiolation of uridine at the wobble position (U34) of tRNA, leading to the formation of s(2)U34. The protein is tRNA-specific 2-thiouridylase MnmA of Roseiflexus castenholzii (strain DSM 13941 / HLO8).